We begin with the raw amino-acid sequence, 362 residues long: Melatonin receptor type 1B (362 aa).

The Extracellular portion of the chain corresponds to 1–42 (MSENGSFANCCEAGGWAVRPGWSGAGSARPSRTPRPPWVAPA). Asparagine 4 is a glycosylation site (N-linked (GlcNAc...) asparagine). A helical membrane pass occupies residues 43 to 63 (LSAVLIVTTAVDVVGNLLVIL). Topologically, residues 64-76 (SVLRNRKLRNAGN) are cytoplasmic. Residues 77–97 (LFLVSLALADLVVAFYPYPLI) traverse the membrane as a helical segment. At 98-115 (LVAIFYDGWALGEEHCKA) the chain is on the extracellular side. A disulfide bond links cysteine 113 and cysteine 190. Residues 116–136 (SAFVMGLSVIGSVFNITAIAI) form a helical membrane-spanning segment. Residues 137–155 (NRYCYICHSMAYHRIYRRW) are Cytoplasmic-facing. A helical transmembrane segment spans residues 156–176 (HTPLHICLIWLLTVVALLPNF). Melatonin is bound by residues asparagine 175 and glutamine 194. Residues 177–200 (FVGSLEYDPRIYSCTFIQTASTQY) lie on the Extracellular side of the membrane. The chain crosses the membrane as a helical span at residues 201 to 221 (TAAVVVIHFLLPIAVVSFCYL). Over 222–253 (RIWVLVLQARRKAKPESRLCLKPSDLRSFLTM) the chain is Cytoplasmic. Residues 254–274 (FVVFVIFAICWAPLNCIGLAV) form a helical membrane-spanning segment. Residues 275–287 (AINPQEMAPQIPE) are Extracellular-facing. The helical transmembrane segment at 288-308 (GLFVTSYLLAYFNSCLNAIVY) threads the bilayer. Residues 309-362 (GLLNQNFRREYKRILLALWNPRHCIQDASKGSHAEGLQSPAPPIIGVQHQADAL) are Cytoplasmic-facing.

This sequence belongs to the G-protein coupled receptor 1 family. As to quaternary structure, interacts with GPR61, GPR62 and GPR135. Expressed in retina and less in brain and hippocampus.

It is found in the cell membrane. Functionally, high affinity receptor for melatonin. Likely to mediate the reproductive and circadian actions of melatonin. The activity of this receptor is mediated by pertussis toxin sensitive G proteins that inhibit adenylate cyclase activity. This chain is Melatonin receptor type 1B (MTNR1B), found in Homo sapiens (Human).